We begin with the raw amino-acid sequence, 259 residues long: Thiazole synthase (259 aa).

Catalysis depends on K99, which acts as the Schiff-base intermediate with DXP. 1-deoxy-D-xylulose 5-phosphate-binding positions include G160, 186–187, and 208–209; these read AG and NT.

Belongs to the ThiG family. In terms of assembly, homotetramer. Forms heterodimers with either ThiH or ThiS.

It localises to the cytoplasm. The enzyme catalyses [ThiS sulfur-carrier protein]-C-terminal-Gly-aminoethanethioate + 2-iminoacetate + 1-deoxy-D-xylulose 5-phosphate = [ThiS sulfur-carrier protein]-C-terminal Gly-Gly + 2-[(2R,5Z)-2-carboxy-4-methylthiazol-5(2H)-ylidene]ethyl phosphate + 2 H2O + H(+). The protein operates within cofactor biosynthesis; thiamine diphosphate biosynthesis. In terms of biological role, catalyzes the rearrangement of 1-deoxy-D-xylulose 5-phosphate (DXP) to produce the thiazole phosphate moiety of thiamine. Sulfur is provided by the thiocarboxylate moiety of the carrier protein ThiS. In vitro, sulfur can be provided by H(2)S. This Porphyromonas gingivalis (strain ATCC 33277 / DSM 20709 / CIP 103683 / JCM 12257 / NCTC 11834 / 2561) protein is Thiazole synthase.